Reading from the N-terminus, the 381-residue chain is Succinyl-diaminopimelate desuccinylase (381 aa).

His-71 provides a ligand contact to Zn(2+). Asp-73 is a catalytic residue. Asp-104 lines the Zn(2+) pocket. Glu-138 acts as the Proton acceptor in catalysis. Glu-139, Glu-167, and His-353 together coordinate Zn(2+).

The protein belongs to the peptidase M20A family. DapE subfamily. As to quaternary structure, homodimer. Zn(2+) serves as cofactor. The cofactor is Co(2+).

The catalysed reaction is N-succinyl-(2S,6S)-2,6-diaminopimelate + H2O = (2S,6S)-2,6-diaminopimelate + succinate. It functions in the pathway amino-acid biosynthesis; L-lysine biosynthesis via DAP pathway; LL-2,6-diaminopimelate from (S)-tetrahydrodipicolinate (succinylase route): step 3/3. Its function is as follows. Catalyzes the hydrolysis of N-succinyl-L,L-diaminopimelic acid (SDAP), forming succinate and LL-2,6-diaminopimelate (DAP), an intermediate involved in the bacterial biosynthesis of lysine and meso-diaminopimelic acid, an essential component of bacterial cell walls. The polypeptide is Succinyl-diaminopimelate desuccinylase (Shewanella halifaxensis (strain HAW-EB4)).